We begin with the raw amino-acid sequence, 303 residues long: Esterase (303 aa).

The Involved in the stabilization of the negatively charged intermediate by the formation of the oxyanion hole signature appears at 79-81; the sequence is HGG. Residues Ser149 and Glu244 contribute to the active site.

Belongs to the 'GDXG' lipolytic enzyme family.

Its subcellular location is the secreted. The sequence is that of Esterase (est) from Acinetobacter venetianus (strain ATCC 31012 / DSM 23050 / BCRC 14357 / CCUG 45561 / CIP 110063 / KCTC 2702 / LMG 19082 / RAG-1).